Reading from the N-terminus, the 2217-residue chain is Protein irg-7 (2217 aa).

An N-terminal signal peptide occupies residues 1–16 (MRNWVLIAALAVICLA). 2 EGF-like domains span residues 370–405 (SGSTCSQMLCANGGFLPTPTSDRCQCPEGFSGFHCQ) and 864–896 (TGTYCQNIICYNGGTASGDHCVCPPGYAGESCE). Disulfide bonds link Cys379/Cys393, Cys395/Cys404, Cys868/Cys873, Cys886/Cys895, Cys1212/Cys1312, Cys1285/Cys1304, Cys1508/Cys1521, and Cys1523/Cys1532. One can recognise a C-type lectin domain in the interval 1188–1313 (IGQYCIKFMA…CAEPRAFACQ (126 aa)). The 35-residue stretch at 1499–1533 (TGSRCTVPICVNGGTRNPDEATCSCPDGYEGPNCQ) folds into the EGF-like 3 domain. Residues 2016–2202 (DVVFMIDGSQ…NNQIKTIQQL (187 aa)) enclose the VWFA domain.

It is found in the secreted. Plays a role in innate immunity, probably via the atf-7 pathway, to confer resistance to pathogenic bacteria. May also play a role in the regulation of longevity. This chain is Protein irg-7, found in Caenorhabditis elegans.